The chain runs to 789 residues: Ribosomal protein S6 kinase alpha-5 (789 aa).

Residues 39–308 (FELLKVLGTG…ADEIKQHPFF (270 aa)) enclose the Protein kinase 1 domain. ATP contacts are provided by residues 45 to 53 (LGTGAYGKV) and Lys-71. Catalysis depends on Asp-167, which acts as the Proton acceptor. Ser-202 carries the phosphoserine; by autocatalysis modification. In terms of domain architecture, AGC-kinase C-terminal spans 309–377 (QNINWDDLAA…VAPSILFKRN (69 aa)). At Ser-350 the chain carries Phosphoserine. A phosphoserine; by autocatalysis mark is found at Ser-366 and Ser-371. In terms of domain architecture, Protein kinase 2 spans 416–677 (DLKEKPLGEG…MSSLRYNEWL (262 aa)). ATP contacts are provided by residues 422–430 (LGEGSFSIC) and Lys-445. The Proton acceptor role is filled by Asp-534. Residues Thr-571 and Thr-690 each carry the phosphothreonine modification. A disordered region spans residues 731–789 (AKRRKMKKTSTSTETRSSSSESSHSSSSHSHGKTTPTKTLQPTNPTDSNNPETIFQFSD). Residues 739-769 (TSTSTETRSSSSESSHSSSSHSHGKTTPTKT) show a composition bias toward low complexity. A phosphoserine; by autocatalysis mark is found at Ser-740, Ser-742, and Ser-748. The span at 770–789 (LQPTNPTDSNNPETIFQFSD) shows a compositional bias: polar residues.

Belongs to the protein kinase superfamily. AGC Ser/Thr protein kinase family. S6 kinase subfamily. Mg(2+) serves as cofactor. In terms of processing, ser-366 and Thr-571 phosphorylation is required for kinase activity. Ser-366 and Ser-202 are autophosphorylated by the C-terminal kinase domain, and their phosphorylation is essential for the catalytic activity of the N-terminal kinase domain. Phosphorylated at Ser-350, Thr-571 and Thr-690 by MAP kinases. Autophosphorylated at Ser-740, Ser-742 and Ser-748 by the N-terminal kinase domain. In terms of tissue distribution, widely expressed with high levels in heart, brain and placenta. Less abundant in lung, kidney and liver.

It localises to the nucleus. The enzyme catalyses L-seryl-[protein] + ATP = O-phospho-L-seryl-[protein] + ADP + H(+). It carries out the reaction L-threonyl-[protein] + ATP = O-phospho-L-threonyl-[protein] + ADP + H(+). Its activity is regulated as follows. Activated by phosphorylation at Ser-350, Thr-571 and Thr-690 by MAP kinases, and by further autophosphorylation of Ser-202, Ser-366 and Ser-371 by the activated C-terminal kinase domain. The active N-terminal kinase domain finally phosphorylates downstream substrates, as well as Ser-740, Ser-742 and Ser-748 in its own C-terminal region. Functionally, serine/threonine-protein kinase that is required for the mitogen or stress-induced phosphorylation of the transcription factors CREB1 and ATF1 and that contributes to gene activation by histone phosphorylation. Phosphorylates CREB1 and ATF1 in response to mitogenic or stress stimuli such as UV-C irradiation, epidermal growth factor (EGF) and anisomycin. Directly represses transcription via phosphorylation of 'Ser-1' of histone H2A. Phosphorylates 'Ser-10' of histone H3 in response to mitogenics, stress stimuli and EGF, which results in the transcriptional activation of several immediate early genes, including proto-oncogenes c-fos/FOS and c-jun/JUN. May also phosphorylate 'Ser-28' of histone H3. Mediates the mitogen- and stress-induced phosphorylation of high mobility group protein 1 (HMGN1/HMG14). This is Ribosomal protein S6 kinase alpha-5 (RPS6KA5) from Gallus gallus (Chicken).